The primary structure comprises 207 residues: Ribosome maturation factor RimM (207 aa).

The 94-residue stretch at 114 to 207 (DDEYYWVDLI…RIDSDWPLDY (94 aa)) folds into the PRC barrel domain.

It belongs to the RimM family. Binds ribosomal protein uS19.

Its subcellular location is the cytoplasm. Functionally, an accessory protein needed during the final step in the assembly of 30S ribosomal subunit, possibly for assembly of the head region. Essential for efficient processing of 16S rRNA. May be needed both before and after RbfA during the maturation of 16S rRNA. It has affinity for free ribosomal 30S subunits but not for 70S ribosomes. The protein is Ribosome maturation factor RimM of Bordetella bronchiseptica (strain ATCC BAA-588 / NCTC 13252 / RB50) (Alcaligenes bronchisepticus).